Reading from the N-terminus, the 220-residue chain is PKHD-type hydroxylase sync_1544 (220 aa).

Residues 79-173 (KLHRFLISKT…RTVCVGWIES (95 aa)) form the Fe2OG dioxygenase domain. Fe cation contacts are provided by His-97, Asp-99, and His-154. Arg-164 is a 2-oxoglutarate binding site.

Requires Fe(2+) as cofactor. The cofactor is L-ascorbate.

The chain is PKHD-type hydroxylase sync_1544 from Synechococcus sp. (strain CC9311).